Reading from the N-terminus, the 33-residue chain is Protamine TP17 (33 aa).

Residues 1-33 (MPRRRRSSSRPVRRRRRPRVSRRRRRRGRRRRR) are disordered.

Testis.

The protein resides in the nucleus. Its subcellular location is the chromosome. Functionally, protamines substitute for histones in the chromatin of sperm during the haploid phase of spermatogenesis. They compact sperm DNA into a highly condensed, stable and inactive complex. This chain is Protamine TP17, found in Oncorhynchus mykiss (Rainbow trout).